We begin with the raw amino-acid sequence, 384 residues long: GTPase Obg (384 aa).

Positions 1-159 (MKFIDEAKIE…RSLQLELKVL (159 aa)) constitute an Obg domain. Residues 20–46 (ATSFRREKFVPRGGPDGGDGGKGGSVW) are disordered. Residues 33–43 (GPDGGDGGKGG) are compositionally biased toward gly residues. The region spanning 160 to 348 (ADVGLLGMPN…LVHQINQYLT (189 aa)) is the OBG-type G domain. GTP-binding positions include 166-173 (GMPNAGKS), 191-195 (FTTLH), 213-216 (DIPG), 284-287 (NKLD), and 329-331 (SAL). Residues Ser-173 and Thr-193 each contribute to the Mg(2+) site.

The protein belongs to the TRAFAC class OBG-HflX-like GTPase superfamily. OBG GTPase family. In terms of assembly, monomer. Mg(2+) serves as cofactor.

The protein resides in the cytoplasm. Its function is as follows. An essential GTPase which binds GTP, GDP and possibly (p)ppGpp with moderate affinity, with high nucleotide exchange rates and a fairly low GTP hydrolysis rate. Plays a role in control of the cell cycle, stress response, ribosome biogenesis and in those bacteria that undergo differentiation, in morphogenesis control. In Neisseria meningitidis serogroup B (strain ATCC BAA-335 / MC58), this protein is GTPase Obg.